The primary structure comprises 306 residues: Voltage-dependent anion channel-forming protein RSc3414 (306 aa).

Helical transmembrane passes span Leu28–Ile48, Val50–Phe70, Tyr213–Val233, and Phe239–Ala259.

The protein belongs to the anion channel-forming bestrophin (TC 1.A.46) family.

The protein localises to the cell membrane. This Ralstonia nicotianae (strain ATCC BAA-1114 / GMI1000) (Ralstonia solanacearum) protein is Voltage-dependent anion channel-forming protein RSc3414.